Consider the following 301-residue polypeptide: Galectin-6 (301 aa).

Galectin domains are found at residues 19-149 and 173-301; these read YKRP…INFF and YVGA…YVHI.

This is Galectin-6 (Lgals6) from Mus musculus (Mouse).